A 361-amino-acid polypeptide reads, in one-letter code: UDP-N-acetylglucosamine--N-acetylmuramyl-(pentapeptide) pyrophosphoryl-undecaprenol N-acetylglucosamine transferase (361 aa).

UDP-N-acetyl-alpha-D-glucosamine-binding positions include 21–23, N131, R172, S195, I250, and Q295; that span reads TGG.

The protein belongs to the glycosyltransferase 28 family. MurG subfamily.

The protein resides in the cell inner membrane. It carries out the reaction di-trans,octa-cis-undecaprenyl diphospho-N-acetyl-alpha-D-muramoyl-L-alanyl-D-glutamyl-meso-2,6-diaminopimeloyl-D-alanyl-D-alanine + UDP-N-acetyl-alpha-D-glucosamine = di-trans,octa-cis-undecaprenyl diphospho-[N-acetyl-alpha-D-glucosaminyl-(1-&gt;4)]-N-acetyl-alpha-D-muramoyl-L-alanyl-D-glutamyl-meso-2,6-diaminopimeloyl-D-alanyl-D-alanine + UDP + H(+). It participates in cell wall biogenesis; peptidoglycan biosynthesis. Functionally, cell wall formation. Catalyzes the transfer of a GlcNAc subunit on undecaprenyl-pyrophosphoryl-MurNAc-pentapeptide (lipid intermediate I) to form undecaprenyl-pyrophosphoryl-MurNAc-(pentapeptide)GlcNAc (lipid intermediate II). The protein is UDP-N-acetylglucosamine--N-acetylmuramyl-(pentapeptide) pyrophosphoryl-undecaprenol N-acetylglucosamine transferase of Solibacter usitatus (strain Ellin6076).